We begin with the raw amino-acid sequence, 231 residues long: Ribonuclease 3 (231 aa).

Residues 7–135 (IQAIESKLNF…ILGAVYLDGG (129 aa)) enclose the RNase III domain. A Mg(2+)-binding site is contributed by Glu-48. Asp-52 is an active-site residue. Residues Asn-121 and Glu-124 each coordinate Mg(2+). Residue Glu-124 is part of the active site. Positions 160-229 (NPKNRLQQFT…AKQALSTHDN (70 aa)) constitute a DRBM domain.

This sequence belongs to the ribonuclease III family. In terms of assembly, homodimer. Requires Mg(2+) as cofactor.

The protein resides in the cytoplasm. The enzyme catalyses Endonucleolytic cleavage to 5'-phosphomonoester.. Functionally, digests double-stranded RNA. Involved in the processing of primary rRNA transcript to yield the immediate precursors to the large and small rRNAs (23S and 16S). Processes some mRNAs, and tRNAs when they are encoded in the rRNA operon. Processes pre-crRNA and tracrRNA of type II CRISPR loci if present in the organism. This Chlamydia trachomatis serovar L2 (strain ATCC VR-902B / DSM 19102 / 434/Bu) protein is Ribonuclease 3.